The sequence spans 422 residues: Histidine--tRNA ligase (422 aa).

The protein belongs to the class-II aminoacyl-tRNA synthetase family. In terms of assembly, homodimer.

The protein resides in the cytoplasm. It catalyses the reaction tRNA(His) + L-histidine + ATP = L-histidyl-tRNA(His) + AMP + diphosphate + H(+). This Nocardia farcinica (strain IFM 10152) protein is Histidine--tRNA ligase.